Reading from the N-terminus, the 386-residue chain is Acetylornithine aminotransferase (386 aa).

Pyridoxal 5'-phosphate-binding positions include 96–97 (GA) and F123. N(2)-acetyl-L-ornithine is bound at residue R126. Residue 208-211 (DEVQ) coordinates pyridoxal 5'-phosphate. At K237 the chain carries N6-(pyridoxal phosphate)lysine. N(2)-acetyl-L-ornithine is bound at residue S265. T266 is a pyridoxal 5'-phosphate binding site.

The protein belongs to the class-III pyridoxal-phosphate-dependent aminotransferase family. ArgD subfamily. Homodimer. Pyridoxal 5'-phosphate is required as a cofactor.

Its subcellular location is the cytoplasm. The enzyme catalyses N(2)-acetyl-L-ornithine + 2-oxoglutarate = N-acetyl-L-glutamate 5-semialdehyde + L-glutamate. The protein operates within amino-acid biosynthesis; L-arginine biosynthesis; N(2)-acetyl-L-ornithine from L-glutamate: step 4/4. This chain is Acetylornithine aminotransferase, found in Bacillus anthracis.